Here is a 283-residue protein sequence, read N- to C-terminus: Tetraspanin-33 (283 aa).

Over Met1–Tyr24 the chain is Cytoplasmic. Residues Leu25–Val45 traverse the membrane as a helical segment. Topologically, residues Tyr46 to Pro64 are extracellular. The chain crosses the membrane as a helical span at residues Ala65 to Gly85. The Cytoplasmic segment spans residues Ser86–Thr96. The chain crosses the membrane as a helical span at residues Phe97–Val117. Over Phe118–Asn235 the chain is Extracellular. Intrachain disulfides connect Cys156-Cys224, Cys157-Cys189, Cys173-Cys183, and Cys190-Cys203. N-linked (GlcNAc...) asparagine glycosylation occurs at Asn172. A helical transmembrane segment spans residues Leu236–Leu256. Residues Ser257–Tyr283 are Cytoplasmic-facing.

Belongs to the tetraspanin (TM4SF) family. As to quaternary structure, homodimer; disulfide-linked. Interacts (via extracellular domain) with ADAM10 (via extracellular domain). Interacts (via cytoplasmic domain) with PLEKHA7 (via WW domains); the interaction is dependent on PDZD11 being bound to PLEKHA7 and facilitates the docking of ADAM10 to zonula adherens.

The protein resides in the cell membrane. Its subcellular location is the cell junction. It is found in the adherens junction. It localises to the cytoplasm. In terms of biological role, part of TspanC8 subgroup, composed of 6 members that interact with the transmembrane metalloprotease ADAM10. This interaction is required for ADAM10 exit from the endoplasmic reticulum and for enzymatic maturation and trafficking to the cell surface as well as substrate specificity. Different TspanC8/ADAM10 complexes have distinct substrates. Plays an important role in normal erythropoiesis. It has a role in the differentiation of erythroid progenitors. Negatively regulates ligand-induced Notch activity probably by regulating ADAM10 activity. Mediates docking of ADAM10 to zonula adherens by interacting with ADAM10 and, in a PDZD11-dependent manner, with the zonula adherens protein PLEKHA7. This Bos taurus (Bovine) protein is Tetraspanin-33 (TSPAN33).